Reading from the N-terminus, the 686-residue chain is ATP-dependent DNA helicase RecG (686 aa).

Positions 50–149 are wedge domain; sequence TVIDLNQAED…GTQTQENADV (100 aa). Residues 279-439 form the Helicase ATP-binding domain; the sequence is DLKAPIRMHR…VFGEMDVSSI (161 aa). Position 292 to 299 (292 to 299) interacts with ATP; that stretch reads GDVGSGKT. Residues 392–395 carry the DEAH box motif; sequence DEQH. The region spanning 462–618 is the Helicase C-terminal domain; it reads VLMQMTSELK…GFELSERDLE (157 aa).

This sequence belongs to the helicase family. RecG subfamily. In terms of assembly, monomer.

The enzyme catalyses Couples ATP hydrolysis with the unwinding of duplex DNA by translocating in the 3'-5' direction.. It carries out the reaction ATP + H2O = ADP + phosphate + H(+). Functionally, plays a critical role in recombination and DNA repair. Helps process Holliday junction intermediates to mature products by catalyzing branch migration. Has replication fork regression activity, unwinds stalled or blocked replication forks to make a HJ that can be resolved. Has a DNA unwinding activity characteristic of a DNA helicase with 3'-5' polarity. This is ATP-dependent DNA helicase RecG from Staphylococcus aureus (strain NCTC 8325 / PS 47).